Here is an 85-residue protein sequence, read N- to C-terminus: Small ribosomal subunit protein bS16 (85 aa).

It belongs to the bacterial ribosomal protein bS16 family.

This chain is Small ribosomal subunit protein bS16, found in Xanthomonas euvesicatoria pv. vesicatoria (strain 85-10) (Xanthomonas campestris pv. vesicatoria).